The chain runs to 493 residues: Glycerol kinase (493 aa).

Threonine 12 is a binding site for ADP. The ATP site is built by threonine 12, threonine 13, and serine 14. A sn-glycerol 3-phosphate-binding site is contributed by threonine 12. Residue arginine 16 coordinates ADP. Sn-glycerol 3-phosphate-binding residues include arginine 82, glutamate 83, tyrosine 132, and aspartate 239. The glycerol site is built by arginine 82, glutamate 83, tyrosine 132, aspartate 239, and glutamine 240. ADP contacts are provided by threonine 261 and glycine 303. Residues threonine 261, glycine 303, glutamine 307, and glycine 402 each contribute to the ATP site. Residues glycine 402 and asparagine 406 each coordinate ADP.

Belongs to the FGGY kinase family.

The catalysed reaction is glycerol + ATP = sn-glycerol 3-phosphate + ADP + H(+). Its pathway is polyol metabolism; glycerol degradation via glycerol kinase pathway; sn-glycerol 3-phosphate from glycerol: step 1/1. Key enzyme in the regulation of glycerol uptake and metabolism. Catalyzes the phosphorylation of glycerol to yield sn-glycerol 3-phosphate. In Thermococcus gammatolerans (strain DSM 15229 / JCM 11827 / EJ3), this protein is Glycerol kinase.